The following is a 202-amino-acid chain: Large ribosomal subunit protein bL9 (202 aa).

The interval 176 to 202 is disordered; the sequence is AAGEFFDPDAQHDDEPAAEDDQNAEEK. Residues 191-202 are compositionally biased toward acidic residues; the sequence is PAAEDDQNAEEK.

It belongs to the bacterial ribosomal protein bL9 family.

Its function is as follows. Binds to the 23S rRNA. The chain is Large ribosomal subunit protein bL9 from Nitrobacter winogradskyi (strain ATCC 25391 / DSM 10237 / CIP 104748 / NCIMB 11846 / Nb-255).